We begin with the raw amino-acid sequence, 217 residues long: NAD(P)H-hydrate epimerase (217 aa).

The YjeF N-terminal domain maps to M1–S217. N48–D52 contributes to the (6S)-NADPHX binding site. K(+)-binding residues include N49 and D127. Residues G131–P137 and D165 contribute to the (6S)-NADPHX site. T168 lines the K(+) pocket.

This sequence belongs to the NnrE/AIBP family. K(+) is required as a cofactor.

It catalyses the reaction (6R)-NADHX = (6S)-NADHX. The enzyme catalyses (6R)-NADPHX = (6S)-NADPHX. In terms of biological role, catalyzes the epimerization of the S- and R-forms of NAD(P)HX, a damaged form of NAD(P)H that is a result of enzymatic or heat-dependent hydration. This is a prerequisite for the S-specific NAD(P)H-hydrate dehydratase to allow the repair of both epimers of NAD(P)HX. The protein is NAD(P)H-hydrate epimerase of Cereibacter sphaeroides (strain KD131 / KCTC 12085) (Rhodobacter sphaeroides).